A 568-amino-acid polypeptide reads, in one-letter code: MLPGLAAAAAHRCSWSSLCRLRLRCRAAACNPSDRQEWQNLVTFGSFSNMVPCSHPYIGTLSQVKLYSTNVQKEGQGSQTLRVEKVPSFETAEGIGTELKAPLKQEPLQVRVKAVLKKREYGSKYTQNNFITGVRAINEFCLKSSDLEQLRKIRRRSPHEDTESFTVYLRSDVEAKSLEVWGSPEALAREKKLRKEAEIEYRERLFRNQKILREYRDFLGNTKPRSRTASVFFKGPGKVVMVAICINGLNCFFKFLAWIYTGSASMFSEAIHSLSDTCNQGLLALGISKSVQTPDPSHPYGFSNMRYISSLISGVGIFMMGAGLSWYHGVMGLLHPQPIESLLWAYCILAGSLVSEGATLLVAVNELRRNARAKGMSFYKYVMESRDPSTNVILLEDTAAVLGVIIAATCMGLTSITGNPLYDSLGSLGVGTLLGMVSAFLIYTNTEALLGRSIQPEQVQRLTELLENDPSVRAIHDVKATDLGLGKVRFKAEVDFDGRVVTRSYLEKQDFDQMLQEIQEVKTPEELETFMLKHGENIIDTLGAEVDRLEKELKKRNPEVRHVDLEIL.

The N-terminal 67 residues, 1 to 67 (MLPGLAAAAA…IGTLSQVKLY (67 aa)), are a transit peptide targeting the mitochondrion. The next 5 helical transmembrane spans lie at 239–259 (VVMV…LAWI), 314–334 (GVGI…MGLL), 342–362 (LLWA…TLLV), 392–412 (VILL…TCMG), and 424–444 (SLGS…LIYT). The LXXLL motif motif lies at 462–466 (LTELL).

Belongs to the cation diffusion facilitator (CDF) transporter (TC 2.A.4) family. SLC30A subfamily. Interacts with GRIP1, ESR1 and AR. As to expression, ubiquitously expressed in fetal and adult tissues and cancer cell lines.

It localises to the mitochondrion membrane. It is found in the nucleus. The protein localises to the endoplasmic reticulum. It carries out the reaction Zn(2+)(in) + 2 H(+)(out) = Zn(2+)(out) + 2 H(+)(in). Functionally, mitochondrial proton-coupled zinc ion antiporter mediating the export of zinc from the mitochondria and involved in zinc homeostasis, zinc mobilization as well as mitochondrial morphology and health. In nucleus, functions as a secondary coactivator for nuclear receptors by cooperating with p160 coactivators subtypes. Plays a role in transcriptional activation of Wnt-responsive genes. The sequence is that of Proton-coupled zinc antiporter SLC30A9, mitochondrial from Homo sapiens (Human).